We begin with the raw amino-acid sequence, 266 residues long: Small ribosomal subunit protein uS3m (266 aa).

This sequence belongs to the universal ribosomal protein uS3 family.

The protein localises to the mitochondrion. The sequence is that of Small ribosomal subunit protein uS3m (MRPS3) from Mycosarcoma maydis (Corn smut fungus).